A 284-amino-acid polypeptide reads, in one-letter code: Acetylglutamate kinase (284 aa).

Residues 66-67 (GG), R88, and N179 contribute to the substrate site.

It belongs to the acetylglutamate kinase family. ArgB subfamily.

Its subcellular location is the cytoplasm. The catalysed reaction is N-acetyl-L-glutamate + ATP = N-acetyl-L-glutamyl 5-phosphate + ADP. The protein operates within amino-acid biosynthesis; L-arginine biosynthesis; N(2)-acetyl-L-ornithine from L-glutamate: step 2/4. Functionally, catalyzes the ATP-dependent phosphorylation of N-acetyl-L-glutamate. This chain is Acetylglutamate kinase, found in Actinobacillus pleuropneumoniae serotype 5b (strain L20).